A 41-amino-acid chain; its full sequence is Large ribosomal subunit protein bL36 (41 aa).

Belongs to the bacterial ribosomal protein bL36 family.

This chain is Large ribosomal subunit protein bL36, found in Azorhizobium caulinodans (strain ATCC 43989 / DSM 5975 / JCM 20966 / LMG 6465 / NBRC 14845 / NCIMB 13405 / ORS 571).